The primary structure comprises 210 residues: MAIERYFIREAVKEMLIDEFLEKELRRAGYGGLDIKKTPLGTKVIIFAANPGYVIGRGGRRIRELTRILERQFGLENPQIDVQEIKNPYLNAKVQAVRIAQALERGIHFRRAAYSAMRAIMNNGARGVEIRLSGKLTGERAKSVRFYQGYLAKVGNPAETLVSKGYAQALLKLGVIGVKVAIMPPDARLPDEIEIVEKPAEEEVSTNEAE.

The KH type-2 domain occupies 17–86 (IDEFLEKELR…NPQIDVQEIK (70 aa)).

Belongs to the universal ribosomal protein uS3 family. As to quaternary structure, part of the 30S ribosomal subunit.

In terms of biological role, binds the lower part of the 30S subunit head. This Pyrococcus horikoshii (strain ATCC 700860 / DSM 12428 / JCM 9974 / NBRC 100139 / OT-3) protein is Small ribosomal subunit protein uS3.